The primary structure comprises 175 residues: Protein-export protein SecB (175 aa).

This sequence belongs to the SecB family. Homotetramer, a dimer of dimers. One homotetramer interacts with 1 SecA dimer.

It is found in the cytoplasm. One of the proteins required for the normal export of preproteins out of the cell cytoplasm. It is a molecular chaperone that binds to a subset of precursor proteins, maintaining them in a translocation-competent state. It also specifically binds to its receptor SecA. The protein is Protein-export protein SecB of Anaplasma marginale (strain Florida).